A 176-amino-acid chain; its full sequence is NAD(P)H-quinone oxidoreductase subunit 6, chloroplastic (176 aa).

Helical transmembrane passes span 10 to 30 (FLLV…VLLT), 32 to 52 (PIYS…FYIL), 61 to 81 (AQLL…VMFM), 92 to 112 (LWTV…VSLM), and 152 to 172 (FFLP…GAIA).

This sequence belongs to the complex I subunit 6 family. NDH is composed of at least 16 different subunits, 5 of which are encoded in the nucleus.

The protein localises to the plastid. The protein resides in the chloroplast thylakoid membrane. It catalyses the reaction a plastoquinone + NADH + (n+1) H(+)(in) = a plastoquinol + NAD(+) + n H(+)(out). The enzyme catalyses a plastoquinone + NADPH + (n+1) H(+)(in) = a plastoquinol + NADP(+) + n H(+)(out). NDH shuttles electrons from NAD(P)H:plastoquinone, via FMN and iron-sulfur (Fe-S) centers, to quinones in the photosynthetic chain and possibly in a chloroplast respiratory chain. The immediate electron acceptor for the enzyme in this species is believed to be plastoquinone. Couples the redox reaction to proton translocation, and thus conserves the redox energy in a proton gradient. This chain is NAD(P)H-quinone oxidoreductase subunit 6, chloroplastic (ndhG), found in Eucalyptus globulus subsp. globulus (Tasmanian blue gum).